Consider the following 247-residue polypeptide: tRNA pseudouridine synthase A (247 aa).

Catalysis depends on Asp52, which acts as the Nucleophile. Tyr113 serves as a coordination point for substrate.

The protein belongs to the tRNA pseudouridine synthase TruA family. In terms of assembly, homodimer.

It catalyses the reaction uridine(38/39/40) in tRNA = pseudouridine(38/39/40) in tRNA. Functionally, formation of pseudouridine at positions 38, 39 and 40 in the anticodon stem and loop of transfer RNAs. In Sinorhizobium fredii (strain NBRC 101917 / NGR234), this protein is tRNA pseudouridine synthase A.